Here is a 61-residue protein sequence, read N- to C-terminus: Large ribosomal subunit protein uL30 (61 aa).

Belongs to the universal ribosomal protein uL30 family. Part of the 50S ribosomal subunit.

The chain is Large ribosomal subunit protein uL30 from Chlorobium phaeobacteroides (strain DSM 266 / SMG 266 / 2430).